The sequence spans 227 residues: Lipoprotein-releasing system ATP-binding protein LolD (227 aa).

In terms of domain architecture, ABC transporter spans 6–227 (LKIEGLRKTY…HLEDGVLVER (222 aa)). 43-50 (APSGAGKS) contributes to the ATP binding site.

It belongs to the ABC transporter superfamily. Lipoprotein translocase (TC 3.A.1.125) family. In terms of assembly, the complex is composed of two ATP-binding proteins (LolD) and two transmembrane proteins (LolC and LolE).

The protein resides in the cell inner membrane. Part of the ABC transporter complex LolCDE involved in the translocation of mature outer membrane-directed lipoproteins, from the inner membrane to the periplasmic chaperone, LolA. Responsible for the formation of the LolA-lipoprotein complex in an ATP-dependent manner. The protein is Lipoprotein-releasing system ATP-binding protein LolD of Ruegeria sp. (strain TM1040) (Silicibacter sp.).